A 1173-amino-acid polypeptide reads, in one-letter code: 3-hydroxy-3-methylglutaryl coenzyme A reductase mlcD (1173 aa).

Residues Asn-143 and Asn-186 are each glycosylated (N-linked (GlcNAc...) asparagine). Residues 241–420 (DVVVMVLGYI…FTFYTAILSI (180 aa)) enclose the SSD domain. The next 7 helical transmembrane spans lie at 242 to 262 (VVVM…LFLS), 272 to 292 (LATS…DVAI), 302 to 322 (LLSE…SITL), 368 to 388 (NIVC…VLGI), 397 to 417 (VLAA…YTAI), 479 to 499 (FWMV…TLFQ), and 594 to 614 (VLSK…SYLF). The tract at residues 498-673 (FQASSSGSLS…FTPTTTDSDS (176 aa)) is linker. Over residues 647 to 666 (NQTPQIQSSLQAPQTRVFTP) the composition is skewed to polar residues. Positions 647-669 (NQTPQIQSSLQAPQTRVFTPTTT) are disordered. Residues 674-1133 (DASLVLIKAS…LVKAHMAHNR (460 aa)) are catalytic. Glu-822 acts as the Charge relay system in catalysis. Asn-886 carries an N-linked (GlcNAc...) asparagine glycan. Lys-956 functions as the Charge relay system in the catalytic mechanism. Residue Asn-997 is glycosylated (N-linked (GlcNAc...) asparagine). The active-site Charge relay system is the Asp-1032. Catalysis depends on His-1128, which acts as the Proton donor. N-linked (GlcNAc...) asparagine glycosylation occurs at Asn-1132. The tract at residues 1132 to 1173 (NRSAPASSAPSRSVSPSGGTRTVPVPNNALRPSAAATDRARR) is disordered. The span at 1133–1148 (RSAPASSAPSRSVSPS) shows a compositional bias: low complexity.

It belongs to the HMG-CoA reductase family.

The protein localises to the endoplasmic reticulum membrane. The enzyme catalyses (R)-mevalonate + 2 NADP(+) + CoA = (3S)-3-hydroxy-3-methylglutaryl-CoA + 2 NADPH + 2 H(+). It participates in polyketide biosynthesis. HMG-CoA reductase; part of the gene cluster that mediates the biosynthesis of compactin, also known as mevastatin or ML-236B, and which acts as a potent competitive inhibitor of HMG-CoA reductase. Compactin biosynthesis is performed in two stages. The first stage is catalyzed by the nonaketide synthase mlcA, which belongs to type I polyketide synthases and catalyzes the iterative nine-step formation of the polyketide. This PKS stage is completed by the action of dehydrogenase mlcG, which catalyzes the NADPH-dependent reduction of the unsaturated tetra-, penta- and heptaketide intermediates that arise during the mlcA-mediated biosynthesis of the nonaketide chain and leads to dihydro-ML-236C carboxylate. Covalently bound dihydro-ML-236C carboxylate is released from mlcA by the mlcF esterase. Conversion of dihydro-ML-236C carboxylate into ML-236A carboxylate is subsequently performed with the participation of molecular oxygen and P450 monoogygenase mlcC. Finally, mlcH performs the conversion of ML-236A carboxylate to ML-236B/compactin carboxylate through the addition of the side-chain diketide moiety produced by the diketide synthase mlcB. HMG-CoA reductase mlcD may act as a down-regulator of compactin production and is involved in conferring resistance to ML-236B/compactin. This Penicillium citrinum protein is 3-hydroxy-3-methylglutaryl coenzyme A reductase mlcD.